Reading from the N-terminus, the 303-residue chain is MVSVNPRPKGFPVFDSSNMSLPSSDGFGSIPATGRTSTVSFSEDPTTKIRKPYTIKKSRENWTDQEHDKFLEALHLFDRDWKKIEAFVGSKTVVQIRSHAQKYFLKVQKSGANEHLPPPRPKRKASHPYPIKAPKNVAYTSLPSSSTLPLLEPGYLYSSDSKSLMGNQAVCASTSSSWNHESTNLPKPVIEVEEPGVSATAPLPNNRCRQEDTERVRAVTKPNNEESCEKPHRVMPNFAEVYSFIGSVFDPNTSGHLQRLKQMDPINMETVLLLMQNLSVNLTSPEFAEQRRLISSYSAKALK.

The 55-residue stretch at 54–108 (TIKKSRENWTDQEHDKFLEALHLFDRDWKKIEAFVGSKTVVQIRSHAQKYFLKVQ) folds into the HTH myb-type domain. Residues 81 to 104 (WKKIEAFVGSKTVVQIRSHAQKYF) constitute a DNA-binding region (H-T-H motif). Residues 109–130 (KSGANEHLPPPRPKRKASHPYP) are disordered.

The protein localises to the nucleus. In terms of biological role, probable transcription factor. The protein is Protein REVEILLE 5 (RVE5) of Arabidopsis thaliana (Mouse-ear cress).